Reading from the N-terminus, the 149-residue chain is SsrA-binding protein (149 aa).

Belongs to the SmpB family.

Its subcellular location is the cytoplasm. Its function is as follows. Required for rescue of stalled ribosomes mediated by trans-translation. Binds to transfer-messenger RNA (tmRNA), required for stable association of tmRNA with ribosomes. tmRNA and SmpB together mimic tRNA shape, replacing the anticodon stem-loop with SmpB. tmRNA is encoded by the ssrA gene; the 2 termini fold to resemble tRNA(Ala) and it encodes a 'tag peptide', a short internal open reading frame. During trans-translation Ala-aminoacylated tmRNA acts like a tRNA, entering the A-site of stalled ribosomes, displacing the stalled mRNA. The ribosome then switches to translate the ORF on the tmRNA; the nascent peptide is terminated with the 'tag peptide' encoded by the tmRNA and targeted for degradation. The ribosome is freed to recommence translation, which seems to be the essential function of trans-translation. The protein is SsrA-binding protein of Wolbachia sp. subsp. Brugia malayi (strain TRS).